The primary structure comprises 258 residues: MGSRSENVGTVTREGSRVEQDDVLMDDDSDSSEYVDMWIDLFLGRKGHEYFCDVDPEYITDRFNLMNLQKTVSKFSYVVQYIVDDLDDSILENMTHARLEQLESDSRKLYGLIHARYIITIKGLQKMYAKYKEADFGRCPRVYCNLQQLLPVGLHDIPGIDCVKLYCPSCEDLYIPKSSRHSSIDGAYFGTSFPGMFLQAFPDMVPKHPTKRYVPKIFGFELHKQAQLTRWQELQRLKLVEKLESKDVDLTKSGGFKT.

Residues 1–10 (MGSRSENVGT) are compositionally biased toward polar residues. A disordered region spans residues 1-29 (MGSRSENVGTVTREGSRVEQDDVLMDDDS).

It belongs to the casein kinase 2 subunit beta family. As to quaternary structure, tetramer composed of an alpha subunit, an alpha' subunit, one beta subunit and one beta' subunit. Interacts with FACT subunits POB3 and SPT16. Interaction with YTA7. In terms of processing, phosphorylated by alpha subunit. Post-translationally, the N-terminus is blocked.

Functionally, regulatory subunit of casein kinase II/CK2. As part of the kinase complex regulates the basal catalytic activity of the alpha subunit a constitutively active serine/threonine-protein kinase that phosphorylates a large number of substrates containing acidic residues C-terminal to the phosphorylated serine or threonine. This chain is Casein kinase II subunit beta', found in Saccharomyces cerevisiae (strain ATCC 204508 / S288c) (Baker's yeast).